We begin with the raw amino-acid sequence, 665 residues long: Phenol hydroxylase (665 aa).

Residues P18–A19, D43–R45, N51–G56, Q118, Y290, D358, and G368–N372 contribute to the FAD site. D55 contacts substrate. Y290 lines the substrate pocket.

This sequence belongs to the PheA/TfdB FAD monooxygenase family. Homodimer. FAD is required as a cofactor.

The catalysed reaction is phenol + NADPH + O2 + H(+) = catechol + NADP(+) + H2O. Its pathway is aromatic compound metabolism; phenol degradation. Its activity is regulated as follows. Inhibited by excess phenol. Heavy metals such AsCuSO(4), AgNO(3), or HgCl(2) severely inhibit activity. Hydroxylates phenol to catechol. Phenol is the best substrate, but the enzyme also accepts isomeric diphenols, hydroxyl-, amino-, halogen- or methyl-substituted phenols and, to a lesser degree, cresols. This is Phenol hydroxylase from Cutaneotrichosporon cutaneum (Yeast).